The chain runs to 316 residues: Methionyl-tRNA formyltransferase (316 aa).

112–115 (SLLP) lines the (6S)-5,6,7,8-tetrahydrofolate pocket.

This sequence belongs to the Fmt family.

It carries out the reaction L-methionyl-tRNA(fMet) + (6R)-10-formyltetrahydrofolate = N-formyl-L-methionyl-tRNA(fMet) + (6S)-5,6,7,8-tetrahydrofolate + H(+). Its function is as follows. Attaches a formyl group to the free amino group of methionyl-tRNA(fMet). The formyl group appears to play a dual role in the initiator identity of N-formylmethionyl-tRNA by promoting its recognition by IF2 and preventing the misappropriation of this tRNA by the elongation apparatus. This is Methionyl-tRNA formyltransferase from Psychromonas ingrahamii (strain DSM 17664 / CCUG 51855 / 37).